Here is a 164-residue protein sequence, read N- to C-terminus: Large ribosomal subunit protein uL15 (164 aa).

The segment at 1-52 is disordered; the sequence is MSLSKLKAPKGANRERTRVGRGQGSGLGKTAGRGGKGQKARSGNMHFEGFEG. The span at 21–37 shows a compositional bias: gly residues; sequence RGQGSGLGKTAGRGGKG.

The protein belongs to the universal ribosomal protein uL15 family. Part of the 50S ribosomal subunit.

Functionally, binds to the 23S rRNA. This is Large ribosomal subunit protein uL15 from Anaeromyxobacter sp. (strain Fw109-5).